The following is a 292-amino-acid chain: uncharacterized protein (292 aa).

Residues Met-1 to Leu-213 are disordered. Composition is skewed to basic residues over residues Thr-27–Lys-43 and Ala-50–Pro-78. Residues Gln-90–Ile-100 are compositionally biased toward polar residues. The segment covering Pro-116–Arg-134 has biased composition (pro residues). Positions Ser-143–Thr-158 are enriched in low complexity.

This is an uncharacterized protein from Caenorhabditis elegans.